The primary structure comprises 343 residues: Anthranilate phosphoribosyltransferase (343 aa).

Residues G84, 87 to 88 (GD), T92, 94 to 97 (NIST), 112 to 120 (KHGNRGVSS), and S124 contribute to the 5-phospho-alpha-D-ribose 1-diphosphate site. Residue G84 participates in anthranilate binding. Mg(2+) is bound at residue S96. N115 lines the anthranilate pocket. R170 provides a ligand contact to anthranilate. D229 and E230 together coordinate Mg(2+).

The protein belongs to the anthranilate phosphoribosyltransferase family. In terms of assembly, homodimer. Mg(2+) is required as a cofactor.

The catalysed reaction is N-(5-phospho-beta-D-ribosyl)anthranilate + diphosphate = 5-phospho-alpha-D-ribose 1-diphosphate + anthranilate. The protein operates within amino-acid biosynthesis; L-tryptophan biosynthesis; L-tryptophan from chorismate: step 2/5. Catalyzes the transfer of the phosphoribosyl group of 5-phosphorylribose-1-pyrophosphate (PRPP) to anthranilate to yield N-(5'-phosphoribosyl)-anthranilate (PRA). The sequence is that of Anthranilate phosphoribosyltransferase from Burkholderia ambifaria (strain MC40-6).